The following is a 297-amino-acid chain: TGF-beta receptor type-2 (297 aa).

The first 23 residues, 1–23 (MGRGLLGGLWPLHVVLWTRIAST), serve as a signal peptide directing secretion. Over 24–166 (IPPHVPKSVN…NPDLLLVIFQ (143 aa)) the chain is Extracellular. 6 disulfides stabilise this stretch: cysteine 51/cysteine 84, cysteine 54/cysteine 71, cysteine 61/cysteine 67, cysteine 77/cysteine 101, cysteine 121/cysteine 136, and cysteine 138/cysteine 143. Residues asparagine 70 and asparagine 94 are each glycosylated (N-linked (GlcNAc...) asparagine). The helical transmembrane segment at 167–187 (VTGVSLLPPLGIAIAVIITFY) threads the bilayer. Topologically, residues 188–297 (CYRVHRQQKL…KTEKDIFSDL (110 aa)) are cytoplasmic. The Protein kinase domain occupies 244-297 (IELDTLVGKGRFAEVYKAKLRQNTSEQFETVAVKIFPYEEYASWKTEKDIFSDL). ATP is bound by residues 250 to 258 (VGKGRFAEV) and lysine 277.

It belongs to the protein kinase superfamily. TKL Ser/Thr protein kinase family. TGFB receptor subfamily. In terms of assembly, homodimer. Heterohexamer; TGFB1, TGFB2 and TGFB3 homodimeric ligands assemble a functional receptor composed of two TGFBR1 and TGFBR2 heterodimers to form a ligand-receptor heterohexamer. The respective affinity of TGFRB1 and TGFRB2 for the ligands may modulate the kinetics of assembly of the receptor and may explain the different biological activities of TGFB1, TGFB2 and TGFB3. Component of a complex composed of TSC22D1 (via N-terminus), TGFBR1 and TGFBR2; the interaction between TSC22D1 and TGFBR1 is inhibited by SMAD7 and promoted by TGFB1. Interacts with DAXX. Interacts with DYNLT4. Interacts with ZFYVE9; ZFYVE9 recruits SMAD2 and SMAD3 to the TGF-beta receptor. Interacts with and is activated by SCUBE3; this interaction does not affect TGFB1-binding to TGFBR2. Interacts with VPS39; this interaction is independent of the receptor kinase activity and of the presence of TGF-beta. Interacts with CLU. Mg(2+) is required as a cofactor. Requires Mn(2+) as cofactor. Phosphorylated on a Ser/Thr residue in the cytoplasmic domain.

It localises to the cell membrane. The protein localises to the membrane raft. It catalyses the reaction L-threonyl-[receptor-protein] + ATP = O-phospho-L-threonyl-[receptor-protein] + ADP + H(+). The enzyme catalyses L-seryl-[receptor-protein] + ATP = O-phospho-L-seryl-[receptor-protein] + ADP + H(+). Transmembrane serine/threonine kinase forming with the TGF-beta type I serine/threonine kinase receptor, TGFBR1, the non-promiscuous receptor for the TGF-beta cytokines TGFB1, TGFB2 and TGFB3. Transduces the TGFB1, TGFB2 and TGFB3 signal from the cell surface to the cytoplasm and is thus regulating a plethora of physiological and pathological processes including cell cycle arrest in epithelial and hematopoietic cells, control of mesenchymal cell proliferation and differentiation, wound healing, extracellular matrix production, immunosuppression and carcinogenesis. The formation of the receptor complex composed of 2 TGFBR1 and 2 TGFBR2 molecules symmetrically bound to the cytokine dimer results in the phosphorylation and the activation of TGFRB1 by the constitutively active TGFBR2. Activated TGFBR1 phosphorylates SMAD2 which dissociates from the receptor and interacts with SMAD4. The SMAD2-SMAD4 complex is subsequently translocated to the nucleus where it modulates the transcription of the TGF-beta-regulated genes. This constitutes the canonical SMAD-dependent TGF-beta signaling cascade. Also involved in non-canonical, SMAD-independent TGF-beta signaling pathways. The protein is TGF-beta receptor type-2 (TGFBR2) of Sus scrofa (Pig).